Reading from the N-terminus, the 491-residue chain is Probable folate-biopterin transporter 4 (491 aa).

6 consecutive transmembrane segments (helical) span residues 14-34 (VAFLWLVCLIYFTQGFRSFVW), 52-72 (SQFVFSVAFFPWSIKPLYGII), 84-104 (TPYLVISTVLSLVPWLVLGLD), 112-132 (LYLMIFLTVQNLGSAMADVVI), 154-174 (VSWFAMAVGGVCGSLLGGYAL), and 179-199 (IETIFLLFTVLPALQLLSCAL). A disordered region spans residues 222-262 (KSLTSNDNYPDTSKSNTRRRKGQKKGKKGDSNGKSETQKKQ). The segment covering 224 to 236 (LTSNDNYPDTSKS) has biased composition (polar residues). The span at 237 to 248 (NTRRRKGQKKGK) shows a compositional bias: basic residues. Residues 249–260 (KGDSNGKSETQK) show a composition bias toward basic and acidic residues. The next 6 helical transmembrane spans lie at 294-314 (MAWFFIAHITVPNLSTVMFYY), 323-343 (AAFLGTARVVGWLGLMFGTFI), 356-376 (SLLFAHIGLSVTILLDMVLVS), 389-411 (MVLFGSALGDAINQLKFMPFLIL), 437-457 (TVGSFMGAGLASLLGISSGSF), and 461-481 (FMGLAIQVFCTYIPVLFLFLI).

Belongs to the major facilitator superfamily. Folate-biopterin transporter (TC 2.A.71) family.

The protein resides in the membrane. Functionally, could mediate folate transport. This chain is Probable folate-biopterin transporter 4, found in Arabidopsis thaliana (Mouse-ear cress).